The following is a 748-amino-acid chain: Polyribonucleotide nucleotidyltransferase (748 aa).

Mg(2+) is bound by residues Asp522 and Asp528. Residues 588–647 (PRVTTIRVPVDKIGEVIGPKGKIINAITEETGAQISIEDDGTVFVGATDGPSAQAAIDRI) enclose the KH domain. Residues 659–728 (GERFLGTVVK…KRGKISLVLV (70 aa)) enclose the S1 motif domain.

The protein belongs to the polyribonucleotide nucleotidyltransferase family. It depends on Mg(2+) as a cofactor.

It is found in the cytoplasm. It catalyses the reaction RNA(n+1) + phosphate = RNA(n) + a ribonucleoside 5'-diphosphate. Involved in mRNA degradation. Catalyzes the phosphorolysis of single-stranded polyribonucleotides processively in the 3'- to 5'-direction. The protein is Polyribonucleotide nucleotidyltransferase of Mycobacterium avium (strain 104).